An 89-amino-acid polypeptide reads, in one-letter code: Small ribosomal subunit protein uS15 (89 aa).

Residues 1–23 (MSLDTTEKQQLINANQTHGTDTG) are disordered. Residues 8-23 (KQQLINANQTHGTDTG) are compositionally biased toward polar residues.

The protein belongs to the universal ribosomal protein uS15 family. In terms of assembly, part of the 30S ribosomal subunit. Forms a bridge to the 50S subunit in the 70S ribosome, contacting the 23S rRNA.

Its function is as follows. One of the primary rRNA binding proteins, it binds directly to 16S rRNA where it helps nucleate assembly of the platform of the 30S subunit by binding and bridging several RNA helices of the 16S rRNA. Functionally, forms an intersubunit bridge (bridge B4) with the 23S rRNA of the 50S subunit in the ribosome. In Prochlorococcus marinus (strain MIT 9313), this protein is Small ribosomal subunit protein uS15.